Here is a 414-residue protein sequence, read N- to C-terminus: MPVCNFFLQGRCRYGDTCWNEHPTGGRGGDYRGNQQPSNRGGFGNRVWINPSQRGGGGSSSAGGSNEWGRGAASARDVQSSEFSFSQNRFSALETQRAGAEDTHTTLDTIQKEMEVWQTSGQWPFSCYSAVNRQISGFIELCPEELRLEYYTSRASGDIQPYINSVQQLANQWRSRVQELRNMSSSTQISVIAELKSSSPPASAPGFGSPGPGFGSATSGFGNTSLSSPPAGFGGAGFGSGPQSSSTFSFAQSKTDFGASNTQQASGFGSSAFAQPSSGFGNPAPSAASFSFAAADSESKPSAGGFGSASGFSFKTATAGQGSGFGSGFGSSSGFGSSSGFGSSSGFGSAFGSAAPAQSSSFGSTGGAADTQSGHGLFTANSELTPEELKEFMAKRFTLGQIPLRPPPADLLMI.

The C3H1-type zinc-finger motif lies at 1–25 (MPVCNFFLQGRCRYGDTCWNEHPTG). Disordered regions lie at residues 24–73 (TGGR…RGAA) and 200–221 (PPASAPGFGSPGPGFGSATSGF). FG repeat units lie at residues 43–44 (FG), 207–208 (FG), 214–215 (FG), 221–222 (FG), 233–234 (FG), 238–239 (FG), 257–258 (FG), 268–269 (FG), 280–281 (FG), 306–307 (FG), 325–326 (FG), 329–330 (FG), 335–336 (FG), 341–342 (FG), 347–348 (FG), 351–352 (FG), and 362–363 (FG).

Probable component of the nuclear pore complex (NPC).

The protein localises to the nucleus. It is found in the nuclear pore complex. The protein resides in the nucleus membrane. Its function is as follows. Required for the export of mRNAs containing poly(A) tails from the nucleus into the cytoplasm. The polypeptide is Nucleoporin NUP42 (nup42) (Danio rerio (Zebrafish)).